A 280-amino-acid polypeptide reads, in one-letter code: Purine nucleoside phosphorylase (280 aa).

Phosphate is bound by residues S15 and 55 to 56 (RH). M194 provides a ligand contact to substrate. T195 lines the phosphate pocket. A substrate-binding site is contributed by 218–220 (DLD).

It belongs to the PNP/MTAP phosphorylase family. MTAP subfamily. Homohexamer. Dimer of a homotrimer.

The enzyme catalyses a purine D-ribonucleoside + phosphate = a purine nucleobase + alpha-D-ribose 1-phosphate. The protein operates within purine metabolism; purine nucleoside salvage. Functionally, purine nucleoside phosphorylase involved in purine salvage. This is Purine nucleoside phosphorylase from Streptomyces coelicolor (strain ATCC BAA-471 / A3(2) / M145).